The following is a 417-amino-acid chain: Guanine nucleotide-exchange factor SEC12 (417 aa).

Topologically, residues 1–388 (MGRRRGVELY…QLHLLPSRRS (388 aa)) are cytoplasmic. Tyrosine 10 bears the 3'-nitrotyrosine mark. The segment at 101 to 135 (KGSKAEKSGSKEQGPRQRKGAPPAEKKSGAQVHPE) is disordered. Residues 103–115 (SKAEKSGSKEQGP) show a composition bias toward basic and acidic residues. WD repeat units lie at residues 152-191 (SNEPLQKVVCFNHDNTLLATGGTDGHVRVWKVPSLEKVLE), 194-232 (AHEGEIGDLTLGPDGKLVTVGWDFKASVWQKDQLVTQLQ), and 298-337 (CGHEVISCLSVSDSGTFLGLGTVTGSVAIYIAFSLQRLYY). A helical transmembrane segment spans residues 389 to 409 (VPVWLLLLLCVGLIIVTILLL). The Lumenal segment spans residues 410 to 417 (QTAFPGFL).

In terms of assembly, interacts with SAR1B (GDP-bound form). Interacts with MIA2; recruits PREB to endoplasmic reticulum exit sites. Interacts with CIDEB; facilitating loading of SCAP-SREBP into COPII vesicles.

The protein localises to the endoplasmic reticulum membrane. The protein resides in the nucleus. Functionally, guanine nucleotide exchange factor (GEF) that regulates the assembly of the coat protein complex II/COPII in endoplasmic reticulum (ER) to Golgi vesicle-mediated transport. Selectively activates SAR1A and SAR1B by promoting the exchange of guanosine diphosphate (GDP) for guanosine triphosphate (GTP) in these small GTPases. In their activated GTP-bound state, SAR1A and SAR1B insert into the membrane of the endoplasmic reticulum where they recruit the remainder of the coat protein complex II/COPII which is responsible for both the sorting of proteins and the deformation and budding of membranes into vesicles destined to the Golgi. Its function is as follows. Was first identified based on its probable role in the regulation of pituitary gene transcription. Binds to the prolactin gene (PRL) promoter and seems to activate transcription. In Mus musculus (Mouse), this protein is Guanine nucleotide-exchange factor SEC12.